Consider the following 428-residue polypeptide: Probable pectin lyase F (428 aa).

The signal sequence occupies residues 1-20; the sequence is MVLLHPLLTAAALLGASARA. Cys83 and Cys107 form a disulfide bridge. Residue Arg257 is part of the active site. Asn276 carries N-linked (GlcNAc...) asparagine glycosylation. Residues Cys324 and Cys332 are joined by a disulfide bond. A disordered region spans residues 383-428; sequence GSGGSGAASSSVSITPSPTSSAIPSSSATPSSSAYARRHYARHHHY. A compositionally biased stretch (low complexity) spans 389–417; it reads AASSSVSITPSPTSSAIPSSSATPSSSAY. Basic residues predominate over residues 418–428; sequence ARRHYARHHHY.

This sequence belongs to the polysaccharide lyase 1 family.

The protein resides in the secreted. The catalysed reaction is Eliminative cleavage of (1-&gt;4)-alpha-D-galacturonan methyl ester to give oligosaccharides with 4-deoxy-6-O-methyl-alpha-D-galact-4-enuronosyl groups at their non-reducing ends.. In terms of biological role, pectinolytic enzymes consist of four classes of enzymes: pectin lyase, polygalacturonase, pectin methylesterase and rhamnogalacturonase. Among pectinolytic enzymes, pectin lyase is the most important in depolymerization of pectin, since it cleaves internal glycosidic bonds of highly methylated pectins. This is Probable pectin lyase F (pelF) from Aspergillus oryzae (strain ATCC 42149 / RIB 40) (Yellow koji mold).